We begin with the raw amino-acid sequence, 134 residues long: Profilin-2 (134 aa).

Cys-13 and Cys-118 are disulfide-bonded. Residues 84-100 carry the Involved in PIP2 interaction motif; that stretch reads AVIRGKKGSGGITIKKT. Phosphothreonine is present on Thr-114.

This sequence belongs to the profilin family. In terms of assembly, occurs in many kinds of cells as a complex with monomeric actin in a 1:1 ratio. In terms of processing, phosphorylated by MAP kinases.

Its subcellular location is the cytoplasm. The protein resides in the cytoskeleton. Functionally, binds to actin and affects the structure of the cytoskeleton. At high concentrations, profilin prevents the polymerization of actin, whereas it enhances it at low concentrations. This is Profilin-2 from Olea europaea (Common olive).